We begin with the raw amino-acid sequence, 345 residues long: Protein-glutamate methylesterase/protein-glutamine glutaminase 1 (345 aa).

The 116-residue stretch at 8–123 folds into the Response regulatory domain; sequence SVLVIDDSAH…FEAMEALRVE (116 aa). At D59 the chain carries 4-aspartylphosphate. The CheB-type methylesterase domain maps to 151-344; sequence AGEPPLVVAV…PALAALARRR (194 aa). Active-site residues include S163, H190, and D286.

The protein belongs to the CheB family. Post-translationally, phosphorylated by CheA. Phosphorylation of the N-terminal regulatory domain activates the methylesterase activity.

The protein resides in the cytoplasm. The enzyme catalyses [protein]-L-glutamate 5-O-methyl ester + H2O = L-glutamyl-[protein] + methanol + H(+). It catalyses the reaction L-glutaminyl-[protein] + H2O = L-glutamyl-[protein] + NH4(+). Involved in chemotaxis. Part of a chemotaxis signal transduction system that modulates chemotaxis in response to various stimuli. Catalyzes the demethylation of specific methylglutamate residues introduced into the chemoreceptors (methyl-accepting chemotaxis proteins or MCP) by CheR. Also mediates the irreversible deamidation of specific glutamine residues to glutamic acid. The protein is Protein-glutamate methylesterase/protein-glutamine glutaminase 1 of Myxococcus xanthus (strain DK1622).